The sequence spans 222 residues: Ribulose-phosphate 3-epimerase (222 aa).

Ser-7 contributes to the substrate binding site. 3 residues coordinate a divalent metal cation: His-32, Asp-34, and His-65. Asp-34 serves as the catalytic Proton acceptor. Substrate-binding positions include His-65, 141-144 (GFSG), 174-176 (DGG), and 196-197 (GS). A divalent metal cation is bound at residue Asp-174. Asp-174 serves as the catalytic Proton donor.

This sequence belongs to the ribulose-phosphate 3-epimerase family. The cofactor is a divalent metal cation.

It catalyses the reaction D-ribulose 5-phosphate = D-xylulose 5-phosphate. It participates in carbohydrate degradation. Catalyzes the reversible epimerization of D-ribulose 5-phosphate to D-xylulose 5-phosphate. The chain is Ribulose-phosphate 3-epimerase from Aquifex aeolicus (strain VF5).